The chain runs to 643 residues: Cytoplasmic dynein 1 intermediate chain 1 (643 aa).

Basic and acidic residues-rich tracts occupy residues 1–13 (MSDK…ELER) and 20–60 (QIRE…RETE). Disordered regions lie at residues 1 to 65 (MSDK…LLQS) and 96 to 123 (MSPS…RTLQ). Ser-2 is subject to N-acetylserine. The tract at residues 2-123 (SDKSDLKAEL…DLGPLTRTLQ (122 aa)) is interaction with DCTN1. Phosphoserine is present on residues Ser-50 and Ser-100. Residues 96 to 107 (MSPSSKSVSTPS) show a composition bias toward low complexity. Thr-105 is subject to Phosphothreonine. Residues Ser-107 and Ser-111 each carry the phosphoserine modification. Positions 145–161 (KLGVSKVTQVDFLPREV) are interaction with DYNLT1. The disordered stretch occupies residues 167 to 219 (ETQTPLATHQSEEDEEDEEMVEPKVGHDSELENQDKKQETKEAPPRELTEEEK). Position 174 is a phosphothreonine (Thr-174). A phosphoserine mark is found at Ser-177 and Ser-195. The span at 187–219 (VEPKVGHDSELENQDKKQETKEAPPRELTEEEK) shows a compositional bias: basic and acidic residues. WD repeat units follow at residues 283–332 (SKHR…TTPE), 336–376 (HCQS…RTPV), 385–426 (AHTH…TPQE), 435–475 (SKPV…AGIG), 480–525 (GHQG…PLYS), 528–568 (DNAD…EVPT), and 574–613 (EGAY…VPHN). Ser-633 carries the phosphoserine modification.

The protein belongs to the dynein intermediate chain family. As to quaternary structure, homodimer. The cytoplasmic dynein 1 complex consists of two catalytic heavy chains (HCs) and a number of non-catalytic subunits presented by intermediate chains (ICs), light intermediate chains (LICs) and light chains (LCs); the composition seems to vary in respect to the IC, LIC and LC composition. The heavy chain homodimer serves as a scaffold for the probable homodimeric assembly of the respective non-catalytic subunits. The ICs and LICs bind directly to the HC dimer and the LCs assemble on the IC dimer. Isoform 1, isoform 2 and isoform 3 interact with DYNC1H1. Isoform 1, isoform 2 and isoform 3 interact with DYNLT3. Isoform 1, isoform 2 and isoform 3 interact with DYNLT1. Interacts with DCTN1. Interacts with MCRS1; the interaction is required for the proper distribution of centriolar satellites. As to expression, high levels seen in the brain and testis, while a lower level expression is seen in the liver, spleen, kidney, lung, skeletal muscle and heart.

It localises to the cytoplasm. The protein resides in the chromosome. It is found in the centromere. The protein localises to the kinetochore. Its subcellular location is the cytoskeleton. It localises to the spindle pole. In terms of biological role, acts as one of several non-catalytic accessory components of the cytoplasmic dynein 1 complex that are thought to be involved in linking dynein to cargos and to adapter proteins that regulate dynein function. Cytoplasmic dynein 1 acts as a motor for the intracellular retrograde motility of vesicles and organelles along microtubules. The intermediate chains mediate the binding of dynein to dynactin via its 150 kDa component (p150-glued) DCTN1. May play a role in mediating the interaction of cytoplasmic dynein with membranous organelles and kinetochores. The chain is Cytoplasmic dynein 1 intermediate chain 1 (Dync1i1) from Rattus norvegicus (Rat).